The following is a 445-amino-acid chain: MPVGRSLSLDPNLLAQLQSHSPTLWLNPHQGMPLPDFAPTAADLADADARLRRCAGLLAELFAELRLSGGLIASPLQPAEPLKRAARAGHAQAGAWYVKRDDALPVAGSIKARGGFHEVLALAESIAERHGLAGADTDRRALASGAARARFARHTVMVGSTGNLGLSIGMLASALGFRTVVHMSADAKAWKKARLRTRGVEVVEHAGDYAKAVDAGRRQAAGMPCCHFVDDEGSRMLFLGYATAAAELAAQLAQAGRPVDARHPLFVHLPCGVGGAPGGIVYGLKALYGEHVHAFVAEPTASPCVLVQLAGDAAHPRSVYDIGLDNRTEADGLAVAQASPLAAALLRAQAAGAFTVDDRQLFAHLLDARERLGIDLEPSAAAAFGGPAWIAGSDAGRAYLRGRGIDPDAATHVIWATGGSLVPAQEHRRFQAHARAQRQVGGAGA.

The residue at position 111 (Lys111) is an N6-(pyridoxal phosphate)lysine.

It belongs to the serine/threonine dehydratase family. DsdA subfamily. It depends on pyridoxal 5'-phosphate as a cofactor.

The enzyme catalyses D-serine = pyruvate + NH4(+). The chain is Probable D-serine dehydratase from Burkholderia pseudomallei (strain 668).